Consider the following 213-residue polypeptide: Outer-membrane lipoprotein LolB (213 aa).

An N-terminal signal peptide occupies residues 1 to 24 (MNNLSYFTKTKLVWVILSLSLLSA). C25 carries N-palmitoyl cysteine lipidation. C25 carries the S-diacylglycerol cysteine lipid modification.

The protein belongs to the LolB family. As to quaternary structure, monomer.

Its subcellular location is the cell outer membrane. Plays a critical role in the incorporation of lipoproteins in the outer membrane after they are released by the LolA protein. This chain is Outer-membrane lipoprotein LolB, found in Shewanella woodyi (strain ATCC 51908 / MS32).